Reading from the N-terminus, the 268-residue chain is TATA-box-binding protein (268 aa).

Positions 1–24 (MDSLTTHPATAQQARAFTSPSSLS) are enriched in polar residues. The interval 1–86 (MDSLTTHPAT…TPAATPGASA (86 aa)) is disordered. Over residues 50 to 86 (NGQSANGNVNGQQQGANAANGNGVMPATPAATPGASA) the composition is skewed to low complexity. 2 consecutive repeat copies span residues 95–171 (LQNI…ARII) and 185–262 (IQNI…YPVL).

It belongs to the TBP family. In terms of assembly, belongs to the TFIID complex together with the TBP-associated factors (TAFs). Binds DNA as monomer.

It is found in the nucleus. Its function is as follows. General transcription factor that functions at the core of the DNA-binding multiprotein factor TFIID. Binding of TFIID to the TATA box is the initial transcriptional step of the pre-initiation complex (PIC), playing a role in the activation of eukaryotic genes transcribed by RNA polymerase II. The polypeptide is TATA-box-binding protein (tbpA) (Emericella nidulans (strain FGSC A4 / ATCC 38163 / CBS 112.46 / NRRL 194 / M139) (Aspergillus nidulans)).